A 1405-amino-acid polypeptide reads, in one-letter code: Xanthine dehydrogenase (1405 aa).

One can recognise a 2Fe-2S ferredoxin-type domain in the interval 17 to 104; sequence NKLTFYVNGV…GKHLITVEGI (88 aa). Positions 56, 61, 64, 86, 125, 128, 161, and 163 each coordinate [2Fe-2S] cluster. One can recognise an FAD-binding PCMH-type domain in the interval 288-474; it reads FGNEQKVWFR…TKIFVPETVP (187 aa). FAD-binding positions include 316–323, Phe397, 407–411, Asp420, Ile464, and Lys483; these read IVGGASEI and TPAGN. Residues Gln833 and Phe864 each coordinate Mo-molybdopterin. Substrate contacts are provided by Glu868 and Arg946. Arg978 serves as a coordination point for Mo-molybdopterin. Residue Phe980 coordinates substrate. Ala1147 serves as a coordination point for Mo-molybdopterin. The Proton acceptor role is filled by Glu1333.

This sequence belongs to the xanthine dehydrogenase family. In terms of assembly, homodimer. Requires Mo-molybdopterin as cofactor. The cofactor is [2Fe-2S] cluster. FAD is required as a cofactor.

It localises to the cytoplasm. The catalysed reaction is hypoxanthine + NAD(+) + H2O = xanthine + NADH + H(+). It catalyses the reaction xanthine + NAD(+) + H2O = urate + NADH + H(+). Its pathway is purine metabolism. With respect to regulation, completely inhibited by allopurinol and significantly inhibited by adenine. Inhibited by Fe(2+), Cd(2+) and Zn(2+) and strongly inhibited by Cu(2+). Mg(2+) and Mo(2+) have no effect on activity. Its function is as follows. Key enzyme in purine degradation. Catalyzes the oxidation of hypoxanthine to xanthine. Catalyzes the oxidation of xanthine to uric acid. Oxidizes xanthine, hypoxanthine and pterine at high rates. Can also act on purine and guanine. This Blastobotrys adeninivorans (Yeast) protein is Xanthine dehydrogenase.